The following is a 677-amino-acid chain: Methionine--tRNA ligase (677 aa).

The short motif at 15-25 is the 'HIGH' region element; sequence PYANGSIHLGH. Residues Cys146, Cys149, Cys159, and Cys162 each coordinate Zn(2+). The 'KMSKS' region motif lies at 333 to 337; sequence KMSKS. Lys336 contacts ATP. Residues 575–677 form the tRNA-binding domain; the sequence is DFAKVDLRVA…AGAKPGHQVK (103 aa).

This sequence belongs to the class-I aminoacyl-tRNA synthetase family. MetG type 1 subfamily. In terms of assembly, homodimer. The cofactor is Zn(2+).

It localises to the cytoplasm. The enzyme catalyses tRNA(Met) + L-methionine + ATP = L-methionyl-tRNA(Met) + AMP + diphosphate. Its function is as follows. Is required not only for elongation of protein synthesis but also for the initiation of all mRNA translation through initiator tRNA(fMet) aminoacylation. In Escherichia coli O157:H7, this protein is Methionine--tRNA ligase.